Consider the following 334-residue polypeptide: Glycerol-1-phosphate dehydrogenase [NAD(P)+] (334 aa).

NAD(+) is bound by residues 77–81 (GKPID) and 99–102 (TTAS). Position 104 (D104) interacts with substrate. S108 is a binding site for NAD(+). Substrate is bound at residue D147. 2 residues coordinate Zn(2+): D147 and H225. H229 is a binding site for substrate. Residue H246 participates in Zn(2+) binding.

It belongs to the glycerol-1-phosphate dehydrogenase family. Zn(2+) is required as a cofactor.

It is found in the cytoplasm. It catalyses the reaction sn-glycerol 1-phosphate + NAD(+) = dihydroxyacetone phosphate + NADH + H(+). It carries out the reaction sn-glycerol 1-phosphate + NADP(+) = dihydroxyacetone phosphate + NADPH + H(+). It functions in the pathway membrane lipid metabolism; glycerophospholipid metabolism. Catalyzes the NAD(P)H-dependent reduction of dihydroxyacetonephosphate (DHAP or glycerone phosphate) to glycerol 1-phosphate (G1P). The G1P thus generated is used as the glycerophosphate backbone of phospholipids in the cellular membranes of Archaea. In Methanococcus vannielii (strain ATCC 35089 / DSM 1224 / JCM 13029 / OCM 148 / SB), this protein is Glycerol-1-phosphate dehydrogenase [NAD(P)+].